A 734-amino-acid polypeptide reads, in one-letter code: MALRFPRFSQGLAQDPTTRRIWFGIATAHDFESHDDITEEGLYQNIFASHFGQLAIIFLWTSGNLFHVAWQGNFESWVQDPLHVRPIAHAIWDPHFGQPAVEAFTRGGALGPVNIAYSGLYQWWYTIGLRTNEDLYTGALFLLFLSAISLIAGWLHLQPKWKPSVSWFKNAESRLNHHLSGLFGVSSLAWTGHLVHVAIPGSRGEYVRWNNFLDVLPSPQGLGPLFTGQWNLYAQNPDSSGHLFGTSQGAGTAILTLLGGFHPQTQSLWLTDIAHHHLAIAFVFLVAGHMYRTNFGIGHSIKDLLEAHTPPGGRLGRAHKGLYDTINNSIHFQLGLALASLGVITSLVAQHMYSLPPYAFIAQDFTTQAALYTHHQYIAGFIMTGAFAHGAIFFIRDYNPEQNEDNVLARMLDHKEAIKSHLSWASLFLGFHTLGLYVHNDVMLAFGTPEKQILIEPIFAQWIQSAHGKTSYGFDVLLSSTNGPAFNAGRSLWLPGWLNAINENGNSLFLTIGPGDFLVHHAIALGLHTTTLILVKGALDARGSKFMPDKKDFGYSFPCDGPGRGGTCDISAWDAFYLAVFWMLNTIGWVTFYWHWKHITLWQGNPSQFNESSTYLMGWLRDYLWLNSSQLINGYNPFGTNSLSVWAWMFLFGHLVWATGFMFLISWRGYWQELIETLAWAHERTPLANLIRWRDKPVALSIVQARLVGLAHFSVGYIFTYAAFLIASTSGKFG.

The next 8 membrane-spanning stretches (helical) occupy residues isoleucine 46–alanine 69, leucine 135–glutamine 158, leucine 175–isoleucine 199, isoleucine 273–tyrosine 291, isoleucine 330–tyrosine 353, alanine 369–isoleucine 395, alanine 417–histidine 439, and phenylalanine 517–valine 535. The [4Fe-4S] cluster site is built by cysteine 559 and cysteine 568. 2 helical membrane passes run alanine 575–tryptophan 596 and leucine 643–isoleucine 665. Histidine 654, methionine 662, and tyrosine 670 together coordinate chlorophyll a. Tryptophan 671 lines the phylloquinone pocket. Residues leucine 707–alanine 727 traverse the membrane as a helical segment.

Belongs to the PsaA/PsaB family. The PsaA/B heterodimer binds the P700 chlorophyll special pair and subsequent electron acceptors. PSI consists of a core antenna complex that captures photons, and an electron transfer chain that converts photonic excitation into a charge separation. The eukaryotic PSI reaction center is composed of at least 11 subunits. It depends on P700 is a chlorophyll a/chlorophyll a' dimer, A0 is one or more chlorophyll a, A1 is one or both phylloquinones and FX is a shared 4Fe-4S iron-sulfur center. as a cofactor.

The protein resides in the plastid. The protein localises to the chloroplast thylakoid membrane. It carries out the reaction reduced [plastocyanin] + hnu + oxidized [2Fe-2S]-[ferredoxin] = oxidized [plastocyanin] + reduced [2Fe-2S]-[ferredoxin]. Its function is as follows. PsaA and PsaB bind P700, the primary electron donor of photosystem I (PSI), as well as the electron acceptors A0, A1 and FX. PSI is a plastocyanin-ferredoxin oxidoreductase, converting photonic excitation into a charge separation, which transfers an electron from the donor P700 chlorophyll pair to the spectroscopically characterized acceptors A0, A1, FX, FA and FB in turn. Oxidized P700 is reduced on the lumenal side of the thylakoid membrane by plastocyanin. The polypeptide is Photosystem I P700 chlorophyll a apoprotein A2 (Amborella trichopoda).